The primary structure comprises 442 residues: ATP-dependent protease ATPase subunit HslU (442 aa).

ATP contacts are provided by residues isoleucine 18, 60 to 65 (GVGKTE), aspartate 255, glutamate 320, and arginine 392.

The protein belongs to the ClpX chaperone family. HslU subfamily. A double ring-shaped homohexamer of HslV is capped on each side by a ring-shaped HslU homohexamer. The assembly of the HslU/HslV complex is dependent on binding of ATP.

It is found in the cytoplasm. Functionally, ATPase subunit of a proteasome-like degradation complex; this subunit has chaperone activity. The binding of ATP and its subsequent hydrolysis by HslU are essential for unfolding of protein substrates subsequently hydrolyzed by HslV. HslU recognizes the N-terminal part of its protein substrates and unfolds these before they are guided to HslV for hydrolysis. The chain is ATP-dependent protease ATPase subunit HslU from Shewanella sp. (strain W3-18-1).